The following is a 515-amino-acid chain: Maturase K (515 aa).

The protein belongs to the intron maturase 2 family. MatK subfamily.

It is found in the plastid. The protein localises to the chloroplast. In terms of biological role, usually encoded in the trnK tRNA gene intron. Probably assists in splicing its own and other chloroplast group II introns. The protein is Maturase K of Pinus clausa (Sand pine).